Here is a 250-residue protein sequence, read N- to C-terminus: 2,3-bisphosphoglycerate-dependent phosphoglycerate mutase (250 aa).

Substrate contacts are provided by residues 10-17, 23-24, arginine 62, 89-92, lysine 100, 116-117, and 185-186; these read RHGESQWN, TG, ERHY, RR, and GN. Histidine 11 functions as the Tele-phosphohistidine intermediate in the catalytic mechanism. Catalysis depends on glutamate 89, which acts as the Proton donor/acceptor.

Belongs to the phosphoglycerate mutase family. BPG-dependent PGAM subfamily. In terms of assembly, homodimer.

It carries out the reaction (2R)-2-phosphoglycerate = (2R)-3-phosphoglycerate. The protein operates within carbohydrate degradation; glycolysis; pyruvate from D-glyceraldehyde 3-phosphate: step 3/5. In terms of biological role, catalyzes the interconversion of 2-phosphoglycerate and 3-phosphoglycerate. This Salmonella paratyphi A (strain ATCC 9150 / SARB42) protein is 2,3-bisphosphoglycerate-dependent phosphoglycerate mutase.